The sequence spans 133 residues: Ribosome-binding factor A (133 aa).

It belongs to the RbfA family. Monomer. Binds 30S ribosomal subunits, but not 50S ribosomal subunits or 70S ribosomes.

It is found in the cytoplasm. One of several proteins that assist in the late maturation steps of the functional core of the 30S ribosomal subunit. Associates with free 30S ribosomal subunits (but not with 30S subunits that are part of 70S ribosomes or polysomes). Required for efficient processing of 16S rRNA. May interact with the 5'-terminal helix region of 16S rRNA. In Cronobacter sakazakii (strain ATCC BAA-894) (Enterobacter sakazakii), this protein is Ribosome-binding factor A.